A 301-amino-acid polypeptide reads, in one-letter code: Glycine--tRNA ligase alpha subunit (301 aa).

The protein belongs to the class-II aminoacyl-tRNA synthetase family. As to quaternary structure, tetramer of two alpha and two beta subunits.

Its subcellular location is the cytoplasm. The enzyme catalyses tRNA(Gly) + glycine + ATP = glycyl-tRNA(Gly) + AMP + diphosphate. The protein is Glycine--tRNA ligase alpha subunit of Shewanella loihica (strain ATCC BAA-1088 / PV-4).